A 304-amino-acid chain; its full sequence is Acetyl-coenzyme A carboxylase carboxyl transferase subunit beta (304 aa).

The CoA carboxyltransferase N-terminal domain maps to 25–294; it reads LWIKCPETGE…KAVKRDTATE (270 aa).

It belongs to the AccD/PCCB family. As to quaternary structure, acetyl-CoA carboxylase is a heterohexamer composed of biotin carboxyl carrier protein (AccB), biotin carboxylase (AccC) and two subunits each of ACCase subunit alpha (AccA) and ACCase subunit beta (AccD).

The protein localises to the cytoplasm. It catalyses the reaction N(6)-carboxybiotinyl-L-lysyl-[protein] + acetyl-CoA = N(6)-biotinyl-L-lysyl-[protein] + malonyl-CoA. The protein operates within lipid metabolism; malonyl-CoA biosynthesis; malonyl-CoA from acetyl-CoA: step 1/1. In terms of biological role, component of the acetyl coenzyme A carboxylase (ACC) complex. Biotin carboxylase (BC) catalyzes the carboxylation of biotin on its carrier protein (BCCP) and then the CO(2) group is transferred by the transcarboxylase to acetyl-CoA to form malonyl-CoA. The sequence is that of Acetyl-coenzyme A carboxylase carboxyl transferase subunit beta from Rhizobium meliloti (strain 1021) (Ensifer meliloti).